A 231-amino-acid polypeptide reads, in one-letter code: Cytochrome c oxidase subunit 2 (231 aa).

Residues 1–14 (MAHPVHVGLKEATS) lie on the Mitochondrial intermembrane side of the membrane. A helical transmembrane segment spans residues 15 to 45 (PFMEELIAFHDHTLMIIFLISSLVLYIISMM). At 46-59 (LTTKLTHTSTMNAQ) the chain is on the mitochondrial matrix side. A helical transmembrane segment spans residues 60–87 (EIEIIWTILPAIILIMIALPSLRILYMT). Over 88-231 (DEFNKPYLTL…WASYLYIVSL (144 aa)) the chain is Mitochondrial intermembrane. Histidine 161, cysteine 196, glutamate 198, cysteine 200, histidine 204, and methionine 207 together coordinate Cu cation. Glutamate 198 lines the Mg(2+) pocket.

It belongs to the cytochrome c oxidase subunit 2 family. In terms of assembly, component of the cytochrome c oxidase (complex IV, CIV), a multisubunit enzyme composed of 14 subunits. The complex is composed of a catalytic core of 3 subunits MT-CO1, MT-CO2 and MT-CO3, encoded in the mitochondrial DNA, and 11 supernumerary subunits COX4I, COX5A, COX5B, COX6A, COX6B, COX6C, COX7A, COX7B, COX7C, COX8 and NDUFA4, which are encoded in the nuclear genome. The complex exists as a monomer or a dimer and forms supercomplexes (SCs) in the inner mitochondrial membrane with NADH-ubiquinone oxidoreductase (complex I, CI) and ubiquinol-cytochrome c oxidoreductase (cytochrome b-c1 complex, complex III, CIII), resulting in different assemblies (supercomplex SCI(1)III(2)IV(1) and megacomplex MCI(2)III(2)IV(2)). Found in a complex with TMEM177, COA6, COX18, COX20, SCO1 and SCO2. Interacts with TMEM177 in a COX20-dependent manner. Interacts with COX20. Interacts with COX16. Cu cation is required as a cofactor.

The protein localises to the mitochondrion inner membrane. It carries out the reaction 4 Fe(II)-[cytochrome c] + O2 + 8 H(+)(in) = 4 Fe(III)-[cytochrome c] + 2 H2O + 4 H(+)(out). Its function is as follows. Component of the cytochrome c oxidase, the last enzyme in the mitochondrial electron transport chain which drives oxidative phosphorylation. The respiratory chain contains 3 multisubunit complexes succinate dehydrogenase (complex II, CII), ubiquinol-cytochrome c oxidoreductase (cytochrome b-c1 complex, complex III, CIII) and cytochrome c oxidase (complex IV, CIV), that cooperate to transfer electrons derived from NADH and succinate to molecular oxygen, creating an electrochemical gradient over the inner membrane that drives transmembrane transport and the ATP synthase. Cytochrome c oxidase is the component of the respiratory chain that catalyzes the reduction of oxygen to water. Electrons originating from reduced cytochrome c in the intermembrane space (IMS) are transferred via the dinuclear copper A center (CU(A)) of subunit 2 and heme A of subunit 1 to the active site in subunit 1, a binuclear center (BNC) formed by heme A3 and copper B (CU(B)). The BNC reduces molecular oxygen to 2 water molecules using 4 electrons from cytochrome c in the IMS and 4 protons from the mitochondrial matrix. This is Cytochrome c oxidase subunit 2 (MT-CO2) from Brachyteles hypoxanthus (Northern muriqui).